Here is a 473-residue protein sequence, read N- to C-terminus: Photosystem II CP43 reaction center protein (473 aa).

Residues 1–14 (MKTLYSLRRFYHVE) constitute a propeptide that is removed on maturation. Residue threonine 15 is modified to N-acetylthreonine. Threonine 15 bears the Phosphothreonine mark. 5 helical membrane passes run 69–93 (LFEVAHFVPEKPMYEQGLILLPHLA), 134–155 (LIGPETLEESFPFFGYVWKDKN), 178–200 (KAVWFGGVYDTWAPGGGDVRKIT), 255–275 (KPFAWARRAFIWSGEAYLSYS), and 291–312 (WFNNTAYPSEFYGPTGPEASQA). Glutamate 367 serves as a coordination point for [CaMn4O5] cluster. Residues 447 to 471 (RARAAAAGFEKGIDRETEPVFFMNP) traverse the membrane as a helical segment.

It belongs to the PsbB/PsbC family. PsbC subfamily. PSII is composed of 1 copy each of membrane proteins PsbA, PsbB, PsbC, PsbD, PsbE, PsbF, PsbH, PsbI, PsbJ, PsbK, PsbL, PsbM, PsbT, PsbX, PsbY, PsbZ, Psb30/Ycf12, at least 3 peripheral proteins of the oxygen-evolving complex and a large number of cofactors. It forms dimeric complexes. Requires Binds multiple chlorophylls and provides some of the ligands for the Ca-4Mn-5O cluster of the oxygen-evolving complex. It may also provide a ligand for a Cl- that is required for oxygen evolution. PSII binds additional chlorophylls, carotenoids and specific lipids. as cofactor.

The protein resides in the plastid. The protein localises to the chloroplast thylakoid membrane. Functionally, one of the components of the core complex of photosystem II (PSII). It binds chlorophyll and helps catalyze the primary light-induced photochemical processes of PSII. PSII is a light-driven water:plastoquinone oxidoreductase, using light energy to abstract electrons from H(2)O, generating O(2) and a proton gradient subsequently used for ATP formation. The sequence is that of Photosystem II CP43 reaction center protein from Staurastrum punctulatum (Green alga).